A 481-amino-acid chain; its full sequence is Cholesterol 16,22-dihydroxylase CYP90G4 (481 aa).

Residues 4-24 traverse the membrane as a helical segment; that stretch reads SYLSFFVLSSILVLTLIFFFM. Cys426 serves as a coordination point for heme.

This sequence belongs to the cytochrome P450 family. In terms of tissue distribution, mainly expressed in leaves and seed pods and, at low levels, in flowers and stems.

Its subcellular location is the membrane. It participates in steroid metabolism; cholesterol metabolism. Functionally, involved in the biosynthesis of spiroketal steroid and saponin natural products from cholesterol such as diosgenin and analogs (e.g. furostanol and spirostanol), plant defense compounds used as main precursors for the industrial production of steroid hormones. During the 5,6-spiroketalization of cholesterol, catalyzes the hydroxylation of cholesterol to form 16S,22S-dihydroxycholesterol and, possibly, the subsequent conversion of 16S,22S-dihydroxycholesterol into 16-oxo-22-hydroxy-cholesterol and 16-hydroxy-22-oxo-cholesterol. 16-hydroxy-22-oxo-cholesterol submit a spontaneous reaction leading to the production of furostanol-type steroid diastereomers, precursors of diosgenin. In Trigonella foenum-graecum (Fenugreek), this protein is Cholesterol 16,22-dihydroxylase CYP90G4.